We begin with the raw amino-acid sequence, 176 residues long: uncharacterized protein (176 aa).

Residues 1–12 show a composition bias toward polar residues; sequence MRLPYSSSKPIP. Disordered stretches follow at residues 1–88 and 109–132; these read MRLP…PQQQ and VNNS…PSSS. A compositionally biased stretch (low complexity) spans 13 to 24; the sequence is TNNNNNNNNTNN. Residues 37-46 show a composition bias toward polar residues; that stretch reads SYYQTQENNK. Over residues 47-88 the composition is skewed to low complexity; that stretch reads PQQSQQHPLLQHQQQQQQQQQQQQQQQQQQQQQQQQQQPQQQ.

This is an uncharacterized protein from Dictyostelium discoideum (Social amoeba).